Here is a 150-residue protein sequence, read N- to C-terminus: MSFRFGQHLIKPSVVFLKTELSFALVNRKPVVPGHVLVCPLRPVERFRDLHPDEVADLFQVTQRVGTVVEKHFQGTSITFSMQDGPEAGQTVKHVHVHVLPRKAGDFPRNDNIYDELQKHDREEEDSPAFWRSEKEMAAEAEALRVYFQA.

The region spanning 2–109 (SFRFGQHLIK…LPRKAGDFPR (108 aa)) is the HIT domain. Substrate is bound by residues His-8, Asn-27, Gln-83, and 89 to 92 (GQTV). A Histidine triad motif motif is present at residues 94–98 (HVHVH). His-96 acts as the Tele-AMP-histidine intermediate in catalysis. Position 98 (His-98) interacts with substrate. Position 114 is a phosphotyrosine; by SRC (Tyr-114). Tyr-147 is modified (phosphotyrosine).

In terms of assembly, homodimer. Interacts with UBE2I. Interacts with MDM2. Interacts with CTNNB1. Identified in a complex with CTNNB1 and LEF1. In terms of processing, phosphorylation at Tyr-114 by SRC is required for induction of apoptosis. In terms of tissue distribution, expressed in heart, brain, lung and skeletal muscle. Particularly strong expression in liver, testis and kidney, where it is confined to the tubular epithelium.

The protein localises to the cytoplasm. Its subcellular location is the nucleus. It localises to the mitochondrion. It carries out the reaction P(1),P(3)-bis(5'-adenosyl) triphosphate + H2O = AMP + ADP + 2 H(+). It catalyses the reaction adenosine 5'-phosphosulfate + H2O = sulfate + AMP + 2 H(+). The enzyme catalyses adenosine 5'-phosphosulfate + NH4(+) = adenosine 5'-phosphoramidate + sulfate + 2 H(+). The catalysed reaction is adenosine 5'-phosphoramidate + H2O = AMP + NH4(+). Possesses dinucleoside triphosphate hydrolase activity. Cleaves P(1)-P(3)-bis(5'-adenosyl) triphosphate (Ap3A) to yield AMP and ADP. Can also hydrolyze P(1)-P(4)-bis(5'-adenosyl) tetraphosphate (Ap4A), but has extremely low activity with ATP. Exhibits adenylylsulfatase activity, hydrolyzing adenosine 5'-phosphosulfate to yield AMP and sulfate. Exhibits adenosine 5'-monophosphoramidase activity, hydrolyzing purine nucleotide phosphoramidates with a single phosphate group such as adenosine 5'monophosphoramidate (AMP-NH2) to yield AMP and NH2. Exhibits adenylylsulfate-ammonia adenylyltransferase, catalyzing the ammonolysis of adenosine 5'-phosphosulfate resulting in the formation of adenosine 5'-phosphoramidate. Also catalyzes the ammonolysis of adenosine 5-phosphorofluoridate and diadenosine triphosphate. Modulates transcriptional activation by CTNNB1 and thereby contributes to regulate the expression of genes essential for cell proliferation and survival, such as CCND1 and BIRC5. Plays a role in the induction of apoptosis via SRC and AKT1 signaling pathways. Inhibits MDM2-mediated proteasomal degradation of p53/TP53 and thereby plays a role in p53/TP53-mediated apoptosis. Induction of apoptosis depends on the ability of FHIT to bind P(1)-P(3)-bis(5'-adenosyl) triphosphate or related compounds, but does not require its catalytic activity. Functions as a tumor suppressor. In Mus musculus (Mouse), this protein is Bis(5'-adenosyl)-triphosphatase (Fhit).